The following is a 364-amino-acid chain: tRNA 2-selenouridine synthase (364 aa).

The Rhodanese domain occupies 14–137 (LIADTPIIDV…LRQTAIQATI (124 aa)). Cys-97 acts as the S-selanylcysteine intermediate in catalysis.

This sequence belongs to the SelU family. In terms of assembly, monomer.

The enzyme catalyses 5-methylaminomethyl-2-thiouridine(34) in tRNA + selenophosphate + (2E)-geranyl diphosphate + H2O + H(+) = 5-methylaminomethyl-2-selenouridine(34) in tRNA + (2E)-thiogeraniol + phosphate + diphosphate. The catalysed reaction is 5-methylaminomethyl-2-thiouridine(34) in tRNA + (2E)-geranyl diphosphate = 5-methylaminomethyl-S-(2E)-geranyl-thiouridine(34) in tRNA + diphosphate. It carries out the reaction 5-methylaminomethyl-S-(2E)-geranyl-thiouridine(34) in tRNA + selenophosphate + H(+) = 5-methylaminomethyl-2-(Se-phospho)selenouridine(34) in tRNA + (2E)-thiogeraniol. It catalyses the reaction 5-methylaminomethyl-2-(Se-phospho)selenouridine(34) in tRNA + H2O = 5-methylaminomethyl-2-selenouridine(34) in tRNA + phosphate. Involved in the post-transcriptional modification of the uridine at the wobble position (U34) of tRNA(Lys), tRNA(Glu) and tRNA(Gln). Catalyzes the conversion of 2-thiouridine (S2U-RNA) to 2-selenouridine (Se2U-RNA). Acts in a two-step process involving geranylation of 2-thiouridine (S2U) to S-geranyl-2-thiouridine (geS2U) and subsequent selenation of the latter derivative to 2-selenouridine (Se2U) in the tRNA chain. This Shigella flexneri serotype 5b (strain 8401) protein is tRNA 2-selenouridine synthase.